Consider the following 353-residue polypeptide: UPF0283 membrane protein YcjF (353 aa).

Helical transmembrane passes span 70 to 90, 100 to 120, and 213 to 233; these read MVMG…VQWT, VALG…GSVV, and ESTL…FIAW.

It belongs to the UPF0283 family.

The protein resides in the cell inner membrane. The sequence is that of UPF0283 membrane protein YcjF from Escherichia coli O127:H6 (strain E2348/69 / EPEC).